The chain runs to 119 residues: Basic phospholipase A2 DE-1 (119 aa).

7 disulfides stabilise this stretch: cysteine 11/cysteine 71, cysteine 26/cysteine 118, cysteine 28/cysteine 44, cysteine 43/cysteine 99, cysteine 50/cysteine 92, cysteine 60/cysteine 85, and cysteine 78/cysteine 90. Tyrosine 27, glycine 29, glycine 31, and aspartate 48 together coordinate Ca(2+). Aspartate 93 is an active-site residue.

Belongs to the phospholipase A2 family. Group I subfamily. D49 sub-subfamily. Requires Ca(2+) as cofactor. As to expression, expressed by the venom gland.

The protein localises to the secreted. The enzyme catalyses a 1,2-diacyl-sn-glycero-3-phosphocholine + H2O = a 1-acyl-sn-glycero-3-phosphocholine + a fatty acid + H(+). In terms of biological role, PLA2 catalyzes the calcium-dependent hydrolysis of the 2-acyl groups in 3-sn-phosphoglycerides. This chain is Basic phospholipase A2 DE-1, found in Hemachatus haemachatus (Rinkhals).